The primary structure comprises 424 residues: Tol-Pal system protein TolB (424 aa).

The signal sequence occupies residues 1-24 (MNKARAIARWISFLLLIAAGQVCA).

It belongs to the TolB family. The Tol-Pal system is composed of five core proteins: the inner membrane proteins TolA, TolQ and TolR, the periplasmic protein TolB and the outer membrane protein Pal. They form a network linking the inner and outer membranes and the peptidoglycan layer.

Its subcellular location is the periplasm. Its function is as follows. Part of the Tol-Pal system, which plays a role in outer membrane invagination during cell division and is important for maintaining outer membrane integrity. This chain is Tol-Pal system protein TolB, found in Methylococcus capsulatus (strain ATCC 33009 / NCIMB 11132 / Bath).